The following is a 99-amino-acid chain: Prostate and testis expressed protein 4 (99 aa).

The signal sequence occupies residues 1 to 23; that stretch reads MNSVTKISTLLIVILSFLCFVEG. Residues 24-99 form the UPAR/Ly6 domain; it reads LICNSCEKSR…CCEKNLCNSF (76 aa). Cystine bridges form between Cys-26–Cys-52, Cys-29–Cys-37, Cys-44–Cys-70, and Cys-74–Cys-90.

As to expression, expressed in prostate, testis, eye, kidney and skeletal muscle. Expressed in the dorsal lobe of prostate. Not expressed in the ventral lobe of prostate.

The protein resides in the secreted. Functionally, enhances sperm motility. Binds to calmodulin and inhibits calcium transport into spermatozoa. May modulate the function of nicotinic acetylcholine receptors. The sequence is that of Prostate and testis expressed protein 4 (Pate4) from Mus musculus (Mouse).